Consider the following 77-residue polypeptide: Large ribosomal subunit protein bL28 (77 aa).

This sequence belongs to the bacterial ribosomal protein bL28 family.

This chain is Large ribosomal subunit protein bL28, found in Paracidovorax citrulli (strain AAC00-1) (Acidovorax citrulli).